The primary structure comprises 544 residues: Inward rectifier potassium channel irk-1 (544 aa).

Residues methionine 1–tryptophan 109 are Cytoplasmic-facing. A helical membrane pass occupies residues arginine 110–isoleucine 134. Over alanine 135 to serine 158 the chain is Extracellular. The segment at residues valine 159–histidine 170 is an intramembrane region (helical; Pore-forming). An intramembrane region (pore-forming) is located at residues histidine 171–histidine 177. The Selectivity filter motif lies at threonine 172–histidine 177. The Extracellular segment spans residues arginine 178 to leucine 186. A helical membrane pass occupies residues alanine 187–isoleucine 208. Topologically, residues valine 209–threonine 544 are cytoplasmic. 2 disordered regions span residues histidine 411–valine 448 and leucine 512–valine 533. Over residues asparagine 438 to valine 448 the composition is skewed to polar residues.

This sequence belongs to the inward rectifier-type potassium channel (TC 1.A.2.1) family. In terms of tissue distribution, expressed in neurons in the head and tail with no expression detected in non-neuronal cells in these regions. Also detected in the egg-laying system of adult hermaphordites with strong expression in the HSN motor neurons and weak expression in vulval muscles.

The protein localises to the membrane. It is found in the perikaryon. It localises to the cell projection. Its function is as follows. Inward rectifier potassium channels are characterized by a greater tendency to allow potassium to flow into the cell rather than out of it. Required for modulation of the activity of the hermaphrodite-specific neurons (HSNs) by the G-protein coupled neuropeptide receptor egl-6 which in turn controls egg-laying behavior. The protein is Inward rectifier potassium channel irk-1 (irk-1) of Caenorhabditis elegans.